The sequence spans 541 residues: Cilia- and flagella-associated protein 97 (541 aa).

A phosphoserine mark is found at Ser8 and Ser19. Disordered regions lie at residues 28–47 (ESNS…GINK), 93–296 (ERKA…KQEN), 313–337 (RCVK…VLDA), 406–430 (LSRQ…PPKL), and 495–514 (HYSP…GLSC). 3 stretches are compositionally biased toward basic and acidic residues: residues 35-47 (KQND…GINK), 93-107 (ERKA…HIEN), and 142-151 (RIPKIVKGED). Acidic residues predominate over residues 152-161 (DYYTDGEESS). Thr155 carries the phosphothreonine modification. Phosphoserine is present on residues Ser160 and Ser161. Residues 176-201 (SSNLKKNVSKKYSSSSLSSSSSRSNS) are compositionally biased toward low complexity. Residues 207-218 (GSDRQRRSESHS) show a composition bias toward basic and acidic residues. 2 stretches are compositionally biased toward polar residues: residues 219–232 (SGKC…SSPK) and 240–250 (KSSAQPSSTKQ). Position 230 is a phosphoserine (Ser230). A Phosphoserine modification is found at Ser258. Over residues 267 to 277 (PLSTPDVSPAQ) the composition is skewed to polar residues. Positions 287 to 296 (QKVKVKKQEN) are enriched in basic and acidic residues. Residues 382 to 459 (RKNYSFTREE…ALLKRLEAVK (78 aa)) are a coiled coil. Residues 503 to 513 (SRTSSATSGLS) are compositionally biased toward polar residues.

This sequence belongs to the CFAP97 family. As to expression, highly expressed in testis with lower levels detected in other tissues including lung, heart and kidney.

This Mus musculus (Mouse) protein is Cilia- and flagella-associated protein 97.